A 734-amino-acid polypeptide reads, in one-letter code: Photosystem I P700 chlorophyll a apoprotein A2 (734 aa).

8 consecutive transmembrane segments (helical) span residues 46–69 (IFAS…FHVA), 135–158 (LYTG…LHLQ), 175–199 (LNHH…HVAI), 273–291 (IAHH…GHMY), 330–353 (LHFQ…QHIY), 369–395 (AALY…IFFI), 417–439 (AIIS…LYVH), and 517–535 (FLVH…LILV). Cys-559 and Cys-568 together coordinate [4Fe-4S] cluster. The next 2 membrane-spanning stretches (helical) occupy residues 575-596 (AFYL…YWHW) and 643-665 (LSVW…MFLI). 3 residues coordinate chlorophyll a: His-654, Met-662, and Tyr-670. Trp-671 is a binding site for phylloquinone. A helical transmembrane segment spans residues 707-727 (LVGLAHFSVGYIFTYAAFLIA).

Belongs to the PsaA/PsaB family. In terms of assembly, the PsaA/B heterodimer binds the P700 chlorophyll special pair and subsequent electron acceptors. PSI consists of a core antenna complex that captures photons, and an electron transfer chain that converts photonic excitation into a charge separation. The eukaryotic PSI reaction center is composed of at least 11 subunits. P700 is a chlorophyll a/chlorophyll a' dimer, A0 is one or more chlorophyll a, A1 is one or both phylloquinones and FX is a shared 4Fe-4S iron-sulfur center. serves as cofactor.

Its subcellular location is the plastid. It is found in the chloroplast thylakoid membrane. The catalysed reaction is reduced [plastocyanin] + hnu + oxidized [2Fe-2S]-[ferredoxin] = oxidized [plastocyanin] + reduced [2Fe-2S]-[ferredoxin]. Functionally, psaA and PsaB bind P700, the primary electron donor of photosystem I (PSI), as well as the electron acceptors A0, A1 and FX. PSI is a plastocyanin-ferredoxin oxidoreductase, converting photonic excitation into a charge separation, which transfers an electron from the donor P700 chlorophyll pair to the spectroscopically characterized acceptors A0, A1, FX, FA and FB in turn. Oxidized P700 is reduced on the lumenal side of the thylakoid membrane by plastocyanin. This chain is Photosystem I P700 chlorophyll a apoprotein A2, found in Staurastrum punctulatum (Green alga).